A 1140-amino-acid chain; its full sequence is Squamosa promoter-binding-like protein 15 (1140 aa).

Disordered regions lie at residues 73-112 (RVNAGLSHHQQQQQQSPPAAAKAAEALRQGGGGSGGLNLQ) and 124-177 (DVSP…GGNS). Composition is skewed to low complexity over residues 76–100 (AGLSHHQQQQQQSPPAAAKAAEALR) and 125–135 (VSPAATTVSSS). The segment covering 164-177 (ASGGGGGGGGGGNS) has biased composition (gly residues). An SBP-type zinc finger spans residues 184–261 (YPMCQVDDCR…AGHNRRRRKT (78 aa)). C187, C192, C209, H212, C228, C231, H235, and C247 together coordinate Zn(2+). A Bipartite nuclear localization signal motif is present at residues 244–260 (KRSCRRRLAGHNRRRRK). Disordered stretches follow at residues 327-382 (NNGN…ADGF), 403-472 (TSNP…TPPY), 496-517 (LSSESSNPLDERSPSSSPPVTH), and 558-597 (KDSERPIENGSPPNPAYQSCYTSTSCSDHSPSTSNSDGQD). Polar residues predominate over residues 345–375 (ASHSQQQDSVQRTTNGFEKQTNGLDKQTNGF). Positions 403–430 (TSNPDSNTSQSQGSSDSSGNNKSKSQST) are enriched in low complexity. Positions 450–466 (RKNDALERSPEMYKQPD) are enriched in basic and acidic residues. Over residues 496-514 (LSSESSNPLDERSPSSSPP) the composition is skewed to polar residues. Residues 579-593 (TSTSCSDHSPSTSNS) show a composition bias toward low complexity.

As to expression, expressed in stems, leaf sheaths, and young panicles.

It localises to the nucleus. In terms of biological role, trans-acting factor that binds specifically to the consensus nucleotide sequence 5'-TNCGTACAA-3'. The chain is Squamosa promoter-binding-like protein 15 (SPL15) from Oryza sativa subsp. indica (Rice).